Reading from the N-terminus, the 251-residue chain is 3-dehydroquinate dehydratase (251 aa).

Residues 47–49 (EWR) and R83 each bind 3-dehydroquinate. H144 acts as the Proton donor/acceptor in catalysis. Residue K171 is the Schiff-base intermediate with substrate of the active site. R214, S233, and Q237 together coordinate 3-dehydroquinate.

This sequence belongs to the type-I 3-dehydroquinase family. In terms of assembly, homodimer.

It catalyses the reaction 3-dehydroquinate = 3-dehydroshikimate + H2O. The protein operates within metabolic intermediate biosynthesis; chorismate biosynthesis; chorismate from D-erythrose 4-phosphate and phosphoenolpyruvate: step 3/7. In terms of biological role, involved in the third step of the chorismate pathway, which leads to the biosynthesis of aromatic amino acids. Catalyzes the cis-dehydration of 3-dehydroquinate (DHQ) and introduces the first double bond of the aromatic ring to yield 3-dehydroshikimate. The polypeptide is 3-dehydroquinate dehydratase (Klebsiella pneumoniae (strain 342)).